Consider the following 537-residue polypeptide: 6-phosphogluconate dehydrogenase, decarboxylating 2, chloroplastic (537 aa).

The transit peptide at 1-44 directs the protein to the chloroplast; it reads MRSEVPSSTSPSFLSPPFIHLPLLSLSSPTPLPHSSSSTFSLFS. NADP(+)-binding positions include 55–60, 78–80, 122–124, and Asn150; these read GLAVMG, NRT, and VKA. Substrate contacts are provided by residues Asn150 and 176–178; that span reads SGG. Catalysis depends on Lys230, which acts as the Proton acceptor. Position 233-234 (233-234) interacts with substrate; sequence HN. The Proton donor role is filled by Glu237. The substrate site is built by Tyr238, Lys308, Arg335, Arg500, and His506.

The protein belongs to the 6-phosphogluconate dehydrogenase family. As to quaternary structure, homodimer.

Its subcellular location is the plastid. The protein resides in the chloroplast. It carries out the reaction 6-phospho-D-gluconate + NADP(+) = D-ribulose 5-phosphate + CO2 + NADPH. The protein operates within carbohydrate degradation; pentose phosphate pathway; D-ribulose 5-phosphate from D-glucose 6-phosphate (oxidative stage): step 3/3. Its function is as follows. Catalyzes the oxidative decarboxylation of 6-phosphogluconate to ribulose 5-phosphate and CO(2), with concomitant reduction of NADP to NADPH. The chain is 6-phosphogluconate dehydrogenase, decarboxylating 2, chloroplastic from Spinacia oleracea (Spinach).